The following is a 416-amino-acid chain: 2,3-bisphosphoglycerate-independent phosphoglycerate mutase (416 aa).

The protein belongs to the BPG-independent phosphoglycerate mutase family. A-PGAM subfamily.

It catalyses the reaction (2R)-2-phosphoglycerate = (2R)-3-phosphoglycerate. It participates in carbohydrate degradation; glycolysis; pyruvate from D-glyceraldehyde 3-phosphate: step 3/5. Its function is as follows. Catalyzes the interconversion of 2-phosphoglycerate and 3-phosphoglycerate. The protein is 2,3-bisphosphoglycerate-independent phosphoglycerate mutase of Ignicoccus hospitalis (strain KIN4/I / DSM 18386 / JCM 14125).